A 219-amino-acid chain; its full sequence is Guanylate kinase (219 aa).

The Guanylate kinase-like domain occupies 15–194 (GLMFVLSSPS…AFAEVQSILK (180 aa)). ATP is bound at residue 22–29 (SPSGAGKT).

Belongs to the guanylate kinase family.

It is found in the cytoplasm. It carries out the reaction GMP + ATP = GDP + ADP. In terms of biological role, essential for recycling GMP and indirectly, cGMP. In Nitrobacter winogradskyi (strain ATCC 25391 / DSM 10237 / CIP 104748 / NCIMB 11846 / Nb-255), this protein is Guanylate kinase.